A 237-amino-acid polypeptide reads, in one-letter code: Uracil-DNA glycosylase (237 aa).

D77 serves as the catalytic Proton acceptor.

It belongs to the uracil-DNA glycosylase (UDG) superfamily. UNG family.

It is found in the cytoplasm. It catalyses the reaction Hydrolyzes single-stranded DNA or mismatched double-stranded DNA and polynucleotides, releasing free uracil.. Functionally, excises uracil residues from the DNA which can arise as a result of misincorporation of dUMP residues by DNA polymerase or due to deamination of cytosine. The chain is Uracil-DNA glycosylase from Acinetobacter baumannii (strain AB307-0294).